Reading from the N-terminus, the 883-residue chain is Ankyrin repeat and SAM domain-containing protein 6 (883 aa).

ANK repeat units lie at residues 8–37, 68–97, 101–130, 134–163, 181–210, 215–244, 282–312, 316–345, 350–379, and 383–414; these read PGLQLLLRACEQGDTDTARRLLEPGADPVA, AGNSALQLAAAGGHEPLVRFLLRRGASVNS, YGWSALMQAARCGHVSVAHLLLDHGADVNA, LGASVLTVASRGGHLGVVKLLLEAGAIVDH, LGITALMAAVQHGHEAVVRLLMEWGADPNH, VGWSPLMLAALLGKLNVAQQLVEKGANPDH, KRRPDIFYALKMGNFQLVKEIADEDPNHVNL, DGATPLMLAAVTGHLPLVQLLVEKHADMDK, HGWTALMQATYHGNKEIVKYLLNQGADVAL, and NGYTAFDLVMLLNDPDTELVRLLASVCMQVNK. The interval 30–50 is disordered; it reads EPGADPVAGPEAGAEPAGPEA. Disordered regions lie at residues 414–439, 490–522, 566–773, and 852–883; these read KDRGRPSHRPPLPHSKARQPWSIPVL, MRAPPQDRTSHLGPPEAAHATKDSGPGNPRREK, SHTC…ITDE, and SFESSASNTRAPGNGPSMAGWTRPEETVSSRR. Basic and acidic residues predominate over residues 566 to 576; sequence SHTCHNGKADP. The span at 607-630 shows a compositional bias: low complexity; that stretch reads PSISRSPASPASSGSFNHSPHSSG. Residues 631–640 are compositionally biased toward gly residues; sequence GASGIGGMSR. Serine 649 carries the post-translational modification Phosphoserine. The span at 649–661 shows a compositional bias: polar residues; the sequence is SGGSVDSVLSQIA. Composition is skewed to low complexity over residues 687–711 and 720–737; these read SSSPPELPASLPSSGSGSSSGPSSS and PPSGTSATSKSTSPTLTP. A phosphoserine mark is found at serine 732 and serine 740. The span at 748–768 shows a compositional bias: low complexity; it reads SSVSSSSSHRQSKSSGGSSSG. Residues 771–834 enclose the SAM domain; the sequence is TDEDELTGIL…LAAISELNAG (64 aa). Residues 852–862 are compositionally biased toward polar residues; it reads SFESSASNTRA. Residues 874–883 are compositionally biased toward basic and acidic residues; that stretch reads RPEETVSSRR.

Homooligomer. Interacts with NEK8. Central component of a complex containing at least ANKS6, INVS, NEK8 and NPHP3. ANKS6 may organize complex assembly by linking INVS and NPHP3 to NEK8 and INVS may target the complex to the proximal ciliary axoneme. Interacts (via SAM domain) with BICC1 (via KH domains) in an RNA-dependent manner. Interacts (via SAM domain) with ANKS3 (via SAM domain). In terms of processing, hydroxylated at Asn-129, most probably by HIF1AN. This hydroxylation results in decreased NEK8-binding. In terms of tissue distribution, expressed in kidney (at protein level).

The protein resides in the cell projection. It localises to the cilium. Its subcellular location is the cytoplasm. Functionally, required for renal function. In Mus musculus (Mouse), this protein is Ankyrin repeat and SAM domain-containing protein 6 (Anks6).